The chain runs to 570 residues: Structure-specific endonuclease subunit EME1 (570 aa).

The segment covering 1–12 has biased composition (low complexity); it reads MALKKSSPSLDS. A disordered region spans residues 1-42; it reads MALKKSSPSLDSGDSDSEELPTFAFLKKEPSSTKRRQPEREE. Ser-12 and Ser-15 each carry phosphoserine. Basic and acidic residues predominate over residues 26–42; that stretch reads LKKEPSSTKRRQPEREE. A phosphoserine mark is found at Ser-84, Ser-85, and Ser-87. A Glycyl lysine isopeptide (Lys-Gly) (interchain with G-Cter in SUMO2) cross-link involves residue Lys-103. Phosphoserine is present on residues Ser-111 and Ser-117. Glycyl lysine isopeptide (Lys-Gly) (interchain with G-Cter in SUMO2) cross-links involve residues Lys-136 and Lys-141. A Phosphothreonine modification is found at Thr-150. Disordered regions lie at residues 187–233 and 372–400; these read KTNS…ERKN and AQNP…ASIG. Basic and acidic residues predominate over residues 220 to 233; that stretch reads RQKESTLRRQERKN. The segment at 250 to 456 is nuclease-like domain; forms the post-nick DNA binding interface and is involved in DNA recognition and bending; it reads KHIIVVLDPV…PFKKLRDETT (207 aa). The tract at residues 476–570 is helix-hairpin-helix (2HhH); forms the pre-nick DNA binding interface and is involved in DNA recognition and bending; it reads RGLALVWRRQ…QPHLSLDSAD (95 aa).

The protein belongs to the EME1/MMS4 family. Part of the heterodimeric MUS81-EME1 complex.

It localises to the nucleus. It is found in the nucleolus. In terms of biological role, non-catalytic subunit of the structure-specific, heterodimeric DNA endonuclease MUS81-EME1 which is involved in the maintenance of genome stability. In the complex, EME1 is required for DNA cleavage, participating in DNA recognition and bending. MUS81-EME1 cleaves 3'-flaps and nicked Holliday junctions, and exhibit limited endonuclease activity with 5' flaps and nicked double-stranded DNAs. Active during prometaphase, MUS81-EME1 resolves mitotic recombination intermediates, including Holliday junctions, which form during homologous recombination. In Homo sapiens (Human), this protein is Structure-specific endonuclease subunit EME1.